Consider the following 346-residue polypeptide: Annexin A1 (346 aa).

S5 carries the phosphoserine; by TRPM7 modification. An Isoglutamyl lysine isopeptide (Gln-Lys) (interchain with K-?) cross-link involves residue Q19. Y21 carries the phosphotyrosine; by EGFR modification. Phosphoserine occurs at positions 34 and 37. Annexin repeat units follow at residues F42 to K113, T114 to K185, D197 to K269, and S273 to G344. K58 carries the N6-acetyllysine modification. Ca(2+)-binding residues include G59, V60, E62, K97, L100, E105, M127, G129, G131, T132, and E134. T136 is subject to Phosphothreonine. 3 residues coordinate Ca(2+): D171, G210, and R213. A Glycyl lysine isopeptide (Lys-Gly) (interchain with G-Cter in SUMO1); alternate cross-link involves residue K214. Residue K214 forms a Glycyl lysine isopeptide (Lys-Gly) (interchain with G-Cter in SUMO2); alternate linkage. Ca(2+) contacts are provided by G215, D253, E255, and M256. K257 is covalently cross-linked (Glycyl lysine isopeptide (Lys-Gly) (interchain with G-Cter in SUMO1)). 4 residues coordinate Ca(2+): E261, M286, G288, and G290. N6-acetyllysine is present on K312. A disulfide bond links C324 and C343. Ca(2+) contacts are provided by L328, E330, and T331. K332 is covalently cross-linked (Glycyl lysine isopeptide (Lys-Gly) (interchain with G-Cter in SUMO1)). E336 serves as a coordination point for Ca(2+).

This sequence belongs to the annexin family. In terms of assembly, homodimer; non-covalently linked. Homodimer; linked by transglutamylation. Homodimers linked by transglutamylation are observed in placenta, but not in other tissues. Interacts with S100A11. Heterotetramer, formed by two molecules each of S100A11 and ANXA1. Interacts with DYSF. Interacts with EGFR. In terms of processing, phosphorylated by protein kinase C, EGFR and TRPM7. Phosphorylated in response to EGF treatment. Post-translationally, sumoylated. Proteolytically cleaved by cathepsin CTSG to release the active N-terminal peptide Ac2-26.

It is found in the nucleus. Its subcellular location is the cytoplasm. It localises to the cell projection. The protein localises to the cilium. The protein resides in the basolateral cell membrane. It is found in the lateral cell membrane. Its subcellular location is the cell membrane. It localises to the apical cell membrane. The protein localises to the membrane. The protein resides in the early endosome. It is found in the cytoplasmic vesicle membrane. Its subcellular location is the endosome membrane. It localises to the secreted. The protein localises to the extracellular space. The protein resides in the extracellular exosome. It is found in the cytoplasmic vesicle. Its subcellular location is the secretory vesicle lumen. It localises to the phagocytic cup. Plays important roles in the innate immune response as effector of glucocorticoid-mediated responses and regulator of the inflammatory process. Has anti-inflammatory activity. Plays a role in glucocorticoid-mediated down-regulation of the early phase of the inflammatory response. Contributes to the adaptive immune response by enhancing signaling cascades that are triggered by T-cell activation, regulates differentiation and proliferation of activated T-cells. Promotes the differentiation of T-cells into Th1 cells and negatively regulates differentiation into Th2 cells. Has no effect on unstimulated T-cells. Negatively regulates hormone exocytosis via activation of the formyl peptide receptors and reorganization of the actin cytoskeleton. Has high affinity for Ca(2+) and can bind up to eight Ca(2+) ions. Displays Ca(2+)-dependent binding to phospholipid membranes. Plays a role in the formation of phagocytic cups and phagosomes. Plays a role in phagocytosis by mediating the Ca(2+)-dependent interaction between phagosomes and the actin cytoskeleton. In terms of biological role, functions at least in part by activating the formyl peptide receptors and downstream signaling cascades. Promotes chemotaxis of granulocytes and monocytes via activation of the formyl peptide receptors. Promotes rearrangement of the actin cytoskeleton, cell polarization and cell migration. Promotes resolution of inflammation and wound healing. Acts via neutrophil N-formyl peptide receptors to enhance the release of CXCL2. The chain is Annexin A1 (ANXA1) from Equus caballus (Horse).